We begin with the raw amino-acid sequence, 492 residues long: Probable cobyric acid synthase (492 aa).

Residues 248–434 form the GATase cobBQ-type domain; sequence PVRIAVVRLP…MHGLFQNPGA (187 aa). Residue C327 is the Nucleophile of the active site. H426 is an active-site residue.

It belongs to the CobB/CobQ family. CobQ subfamily.

It functions in the pathway cofactor biosynthesis; adenosylcobalamin biosynthesis. Functionally, catalyzes amidations at positions B, D, E, and G on adenosylcobyrinic A,C-diamide. NH(2) groups are provided by glutamine, and one molecule of ATP is hydrogenolyzed for each amidation. The sequence is that of Probable cobyric acid synthase from Methanoculleus marisnigri (strain ATCC 35101 / DSM 1498 / JR1).